Reading from the N-terminus, the 463-residue chain is tRNA-2-methylthio-N(6)-dimethylallyladenosine synthase (463 aa).

One can recognise an MTTase N-terminal domain in the interval 19 to 135; that stretch reads GSYWITTFGC…LESLLNQVDS (117 aa). [4Fe-4S] cluster contacts are provided by cysteine 28, cysteine 64, cysteine 98, cysteine 170, cysteine 174, and cysteine 177. The Radical SAM core domain maps to 156 to 393; that stretch reads RDSSICGWVN…NSLVENIAKE (238 aa). One can recognise a TRAM domain in the interval 396 to 463; sequence QRYKNTSQEI…RPFSLTAKLL (68 aa).

It belongs to the methylthiotransferase family. MiaB subfamily. In terms of assembly, monomer. The cofactor is [4Fe-4S] cluster.

It is found in the cytoplasm. The enzyme catalyses N(6)-dimethylallyladenosine(37) in tRNA + (sulfur carrier)-SH + AH2 + 2 S-adenosyl-L-methionine = 2-methylsulfanyl-N(6)-dimethylallyladenosine(37) in tRNA + (sulfur carrier)-H + 5'-deoxyadenosine + L-methionine + A + S-adenosyl-L-homocysteine + 2 H(+). Functionally, catalyzes the methylthiolation of N6-(dimethylallyl)adenosine (i(6)A), leading to the formation of 2-methylthio-N6-(dimethylallyl)adenosine (ms(2)i(6)A) at position 37 in tRNAs that read codons beginning with uridine. The sequence is that of tRNA-2-methylthio-N(6)-dimethylallyladenosine synthase from Prochlorococcus marinus (strain NATL2A).